Reading from the N-terminus, the 308-residue chain is Acetylglutamate kinase (308 aa).

Substrate contacts are provided by residues 86–87, Arg-108, and Asn-201; that span reads GG.

This sequence belongs to the acetylglutamate kinase family. ArgB subfamily.

The protein localises to the cytoplasm. The enzyme catalyses N-acetyl-L-glutamate + ATP = N-acetyl-L-glutamyl 5-phosphate + ADP. The protein operates within amino-acid biosynthesis; L-arginine biosynthesis; N(2)-acetyl-L-ornithine from L-glutamate: step 2/4. Its function is as follows. Catalyzes the ATP-dependent phosphorylation of N-acetyl-L-glutamate. The sequence is that of Acetylglutamate kinase from Prochlorococcus marinus (strain MIT 9313).